The chain runs to 226 residues: Ribonuclease 3 (226 aa).

The RNase III domain maps to 5–127; that stretch reads LERLQRALGY…IIGAIYLDAG (123 aa). Position 40 (Glu40) interacts with Mg(2+). The active site involves Asp44. Asp113 and Glu116 together coordinate Mg(2+). Glu116 is an active-site residue. Residues 154–224 enclose the DRBM domain; the sequence is DSKTRLQEYL…AKQALLALGV (71 aa).

It belongs to the ribonuclease III family. As to quaternary structure, homodimer. The cofactor is Mg(2+).

It is found in the cytoplasm. It catalyses the reaction Endonucleolytic cleavage to 5'-phosphomonoester.. Its function is as follows. Digests double-stranded RNA. Involved in the processing of primary rRNA transcript to yield the immediate precursors to the large and small rRNAs (23S and 16S). Processes some mRNAs, and tRNAs when they are encoded in the rRNA operon. Processes pre-crRNA and tracrRNA of type II CRISPR loci if present in the organism. In Hahella chejuensis (strain KCTC 2396), this protein is Ribonuclease 3.